The chain runs to 231 residues: Demethylmenaquinone methyltransferase (231 aa).

Residues Thr62, Asp80, 100 to 101 (DA), and Ser117 each bind S-adenosyl-L-methionine.

Belongs to the class I-like SAM-binding methyltransferase superfamily. MenG/UbiE family.

The enzyme catalyses a 2-demethylmenaquinol + S-adenosyl-L-methionine = a menaquinol + S-adenosyl-L-homocysteine + H(+). It participates in quinol/quinone metabolism; menaquinone biosynthesis; menaquinol from 1,4-dihydroxy-2-naphthoate: step 2/2. Functionally, methyltransferase required for the conversion of demethylmenaquinol (DMKH2) to menaquinol (MKH2). The protein is Demethylmenaquinone methyltransferase of Mycobacterium marinum (strain ATCC BAA-535 / M).